Here is an 822-residue protein sequence, read N- to C-terminus: Nose resistant to fluoxetine protein 6 (822 aa).

The N-terminal stretch at 1-24 (MGNMRRLLIFAVLVILTVISNSKS) is a signal peptide. N236 carries N-linked (GlcNAc...) asparagine glycosylation. 3 helical membrane-spanning segments follow: residues 306–326 (LAMF…FGTL), 617–637 (PYIR…LNAW), and 655–675 (IICW…LYWF).

This sequence belongs to the acyltransferase 3 family. In L1 larvae through to adult, hyp3 and hyp5, the most anterior cells in the hypodermis, and in intestine. Other hypodermal cells show weaker expression.

It is found in the membrane. Its function is as follows. Plays a role in the uptake of a range of molecules including lipids and xenobiotic compounds from the intestine to surrounding tissues. Mediates transport of lipids from intestine to the reproductive tract. Required for efficient yolk transport into oocytes. Vital for embryonic development. The sequence is that of Nose resistant to fluoxetine protein 6 (nrf-6) from Caenorhabditis elegans.